The chain runs to 89 residues: Small ribosomal subunit protein uS17 (89 aa).

This sequence belongs to the universal ribosomal protein uS17 family. As to quaternary structure, part of the 30S ribosomal subunit.

In terms of biological role, one of the primary rRNA binding proteins, it binds specifically to the 5'-end of 16S ribosomal RNA. This is Small ribosomal subunit protein uS17 from Phytoplasma mali (strain AT).